Here is a 341-residue protein sequence, read N- to C-terminus: Adenylosuccinate synthetase (341 aa).

GTP contacts are provided by residues 12-18 and 42-44; these read GDEGKGK and GHS. Asp13 functions as the Proton acceptor in the catalytic mechanism. Asp13 and Gly42 together coordinate Mg(2+). Residues 13–16, 40–43, Thr127, Arg141, Gln179, Thr194, and Arg256 contribute to the IMP site; these read DEGK and NAGH. The Proton donor role is filled by His43. Residue 252 to 258 participates in substrate binding; sequence VVTGRKR. GTP contacts are provided by residues Arg258, 284–286, and 324–326; these read CID and STG.

Belongs to the adenylosuccinate synthetase family. As to quaternary structure, homodimer. Mg(2+) serves as cofactor.

The protein localises to the cytoplasm. The enzyme catalyses IMP + L-aspartate + GTP = N(6)-(1,2-dicarboxyethyl)-AMP + GDP + phosphate + 2 H(+). It participates in purine metabolism; AMP biosynthesis via de novo pathway; AMP from IMP: step 1/2. Its function is as follows. Plays an important role in the de novo pathway of purine nucleotide biosynthesis. Catalyzes the first committed step in the biosynthesis of AMP from IMP. This is Adenylosuccinate synthetase from Methanosphaera stadtmanae (strain ATCC 43021 / DSM 3091 / JCM 11832 / MCB-3).